Reading from the N-terminus, the 329-residue chain is Lipoyl synthase (329 aa).

Residues 1-23 form a disordered region; it reads MTDLTATPAPAEPAASAYDPTAK. 7 residues coordinate [4Fe-4S] cluster: cysteine 76, cysteine 81, cysteine 87, cysteine 102, cysteine 106, cysteine 109, and serine 316. The 219-residue stretch at 87 to 305 folds into the Radical SAM core domain; the sequence is CFGKGTATFM…EEEAYKMGFT (219 aa).

The protein belongs to the radical SAM superfamily. Lipoyl synthase family. [4Fe-4S] cluster serves as cofactor.

Its subcellular location is the cytoplasm. The enzyme catalyses [[Fe-S] cluster scaffold protein carrying a second [4Fe-4S](2+) cluster] + N(6)-octanoyl-L-lysyl-[protein] + 2 oxidized [2Fe-2S]-[ferredoxin] + 2 S-adenosyl-L-methionine + 4 H(+) = [[Fe-S] cluster scaffold protein] + N(6)-[(R)-dihydrolipoyl]-L-lysyl-[protein] + 4 Fe(3+) + 2 hydrogen sulfide + 2 5'-deoxyadenosine + 2 L-methionine + 2 reduced [2Fe-2S]-[ferredoxin]. The protein operates within protein modification; protein lipoylation via endogenous pathway; protein N(6)-(lipoyl)lysine from octanoyl-[acyl-carrier-protein]: step 2/2. Catalyzes the radical-mediated insertion of two sulfur atoms into the C-6 and C-8 positions of the octanoyl moiety bound to the lipoyl domains of lipoate-dependent enzymes, thereby converting the octanoylated domains into lipoylated derivatives. This chain is Lipoyl synthase, found in Burkholderia mallei (strain NCTC 10247).